Consider the following 491-residue polypeptide: Glutamyl-tRNA(Gln) amidotransferase subunit A (491 aa).

Active-site charge relay system residues include Lys78 and Ser158. Ser182 serves as the catalytic Acyl-ester intermediate.

It belongs to the amidase family. GatA subfamily. In terms of assembly, heterotrimer of A, B and C subunits.

It catalyses the reaction L-glutamyl-tRNA(Gln) + L-glutamine + ATP + H2O = L-glutaminyl-tRNA(Gln) + L-glutamate + ADP + phosphate + H(+). Its function is as follows. Allows the formation of correctly charged Gln-tRNA(Gln) through the transamidation of misacylated Glu-tRNA(Gln) in organisms which lack glutaminyl-tRNA synthetase. The reaction takes place in the presence of glutamine and ATP through an activated gamma-phospho-Glu-tRNA(Gln). The sequence is that of Glutamyl-tRNA(Gln) amidotransferase subunit A from Nitrobacter winogradskyi (strain ATCC 25391 / DSM 10237 / CIP 104748 / NCIMB 11846 / Nb-255).